A 275-amino-acid chain; its full sequence is Large ribosomal subunit protein uL2 (275 aa).

Residues 223–275 (VAMNPIDHPHGGGEGRTSGGRHPVSPWGVPTKGYKTRSNKRTDKYIVRRRNKK) are disordered.

It belongs to the universal ribosomal protein uL2 family. Part of the 50S ribosomal subunit. Forms a bridge to the 30S subunit in the 70S ribosome.

Its function is as follows. One of the primary rRNA binding proteins. Required for association of the 30S and 50S subunits to form the 70S ribosome, for tRNA binding and peptide bond formation. It has been suggested to have peptidyltransferase activity; this is somewhat controversial. Makes several contacts with the 16S rRNA in the 70S ribosome. This Shewanella woodyi (strain ATCC 51908 / MS32) protein is Large ribosomal subunit protein uL2.